The sequence spans 618 residues: ADP,ATP carrier protein 2, chloroplastic (618 aa).

The N-terminal 76 residues, methionine 1–lysine 76, are a transit peptide targeting the chloroplast. Alanine 77 is modified (N-acetylalanine). 11 consecutive transmembrane segments (helical) span residues leucine 110–leucine 130, isoleucine 148–tyrosine 168, alanine 179–methionine 199, leucine 237–phenylalanine 257, phenylalanine 270–valine 289, alanine 312–asparagine 332, leucine 368–serine 388, serine 401–leucine 421, valine 441–proline 461, alanine 464–phenylalanine 484, and leucine 542–alanine 562. Residues arginine 586–isoleucine 618 form a disordered region. Over residues glycine 603–isoleucine 618 the composition is skewed to polar residues.

Belongs to the ADP/ATP translocase tlc (TC 2.A.12.2) family.

The protein localises to the plastid. It is found in the chloroplast membrane. This Arabidopsis thaliana (Mouse-ear cress) protein is ADP,ATP carrier protein 2, chloroplastic (AATP2).